A 334-amino-acid chain; its full sequence is tRNA uridine(34) hydroxylase (334 aa).

The region spanning 123-217 is the Rhodanese domain; it reads SDPDVILVDT…YLEEVKQEES (95 aa). The active-site Cysteine persulfide intermediate is Cys-177.

This sequence belongs to the TrhO family.

The enzyme catalyses uridine(34) in tRNA + AH2 + O2 = 5-hydroxyuridine(34) in tRNA + A + H2O. Catalyzes oxygen-dependent 5-hydroxyuridine (ho5U) modification at position 34 in tRNAs. The polypeptide is tRNA uridine(34) hydroxylase (Shewanella putrefaciens (strain CN-32 / ATCC BAA-453)).